The following is a 128-amino-acid chain: Large ribosomal subunit protein bL19 (128 aa).

Belongs to the bacterial ribosomal protein bL19 family.

Functionally, this protein is located at the 30S-50S ribosomal subunit interface and may play a role in the structure and function of the aminoacyl-tRNA binding site. The polypeptide is Large ribosomal subunit protein bL19 (Verminephrobacter eiseniae (strain EF01-2)).